The sequence spans 476 residues: Neuropeptide-like precursor 1 (476 aa).

An N-terminal signal peptide occupies residues 1–34 (MNDAGASIGRHRGCLLLFVALAVAFSSYVEQVES). Position 133 is a valine amide (Val133). 2 propeptides span residues 160–232 (DEAT…NSYF) and 259–476 (YVMP…RKNQ). 2 disordered regions span residues 275-298 (QNDIDGEKRSVDDDDDDDDDDGEV) and 360-385 (PEVESPVDPDDADIPPPPVPAHSHPT). Positions 286-297 (DDDDDDDDDDGE) are enriched in acidic residues.

In terms of tissue distribution, neuropeptide-like precursor 1-1: Expressed in antennal lobe (AL), corpora cardiaca (CC), corpora allata (CA) and gnathal ganglion (GNG) (at protein level). Expression in AL detected in all animals, in GNG in most animals, expression in CC and CA in few animals (at protein level). Neuropeptide-like precursor 1-2: Expressed in antennal lobe (AL), corpora cardiaca (CC), corpora allata (CA) and gnathal ganglion (GNG) (at protein level). Expression in AL detected in all animals, in GNG in some animals, expression in CC and CA in few animals (at protein level). Neuropeptide-like precursor 1-3: Not expressed in antennal lobe (AL), corpora cardiaca (CC), corpora allata (CA) and gnathal ganglion (GNG) (at protein level). Neuropeptide-like precursor 1-4: Expressed in antennal lobe (AL) and gnathal ganglion (GNG) (at protein level). Expression in AL detected in most animals, in GNG in some animals (at protein level). Not expressed in CC and CA (at protein level). YRVamide: Expressed in antennal lobe (AL), corpora cardiaca (CC), corpora allata (CA) and gnathal ganglion (GNG) (at protein level). Expression in AL and GNG detected in most animals, expression in CC and CA in few animals (at protein level). Extended YRVamide: Expressed in antennal lobe (AL) and gnathal ganglion (GNG) (at protein level). Expression in AL detected in most animals, in GNG in some animals (at protein level). Not expressed in corpora cardiaca (CC) and corpora allata (CA) (at protein level). Neuropeptide-like precursor 1-6: Expressed in antennal lobe (AL), corpora cardiaca (CC), corpora allata (CA) and gnathal ganglion (GNG) (at protein level). Expression in GNG detected in all animals, expression in AL in most animals, in CC and CA in few animals (at protein level). Neuropeptide-like precursor 1-6(1-11): Expressed in antennal lobe (AL) and gnathal ganglion (GNG) in most animals (at protein level). Not expressed in corpora cardiaca (CC) and corpora allata (CA) (at protein level). Neuropeptide-like precursor 1-9: Expressed in antennal lobe (AL) and gnathal ganglion (GNG) (at protein level). Expression in AL detected in all animals in GNG in most (at protein level). Not expressed in corpora cardiaca (CC) and corpora allata (CA) (at protein level).

It localises to the secreted. This Agrotis ipsilon (Black cutworm moth) protein is Neuropeptide-like precursor 1.